The chain runs to 397 residues: MLFGESMTLKIAVVGAGPAGRTSAMFLAKNGFDVDLFEKDRVGGTCLNYGCTYITGLREMADIINNLSILKGEKVHLEEIISFKELQEKINKIQDRIRNKLEKETKELGVNIKYKEFKNKHKNDYDYIIYATGRNYPSNYNGYEVLTHKDIPNLRELPENILIIGGGVVATEYASIFSDFGCNVVLYTRSKILKEIKDEEIRDYLMKKVINFKIINDKEELENLLKDESYTKILAIGGNGRFKTDDYLRVLNEEKVYACGDCLINGGGNTPISRMEGRVVAQNIYNEINNKPLIKPNYELIPKTIRLSLTISYVGKQTNNYKTIRSCVGKGNFFKVLSGVGINKIYYEDGKIVGAITMMPCAEILPYFTQLIRGIDVYNNFMEVHPSTDIFYKEFRS.

This is an uncharacterized protein from Methanocaldococcus jannaschii (strain ATCC 43067 / DSM 2661 / JAL-1 / JCM 10045 / NBRC 100440) (Methanococcus jannaschii).